A 247-amino-acid chain; its full sequence is Uridylate kinase (247 aa).

18–21 (KLSG) provides a ligand contact to ATP. Gly60 is a binding site for UMP. Gly61 and Arg65 together coordinate ATP. UMP-binding positions include Asp80 and 141 to 148 (TGNPFFTT). ATP is bound by residues Thr168, Tyr174, and Asp177.

It belongs to the UMP kinase family. Homohexamer.

The protein resides in the cytoplasm. It catalyses the reaction UMP + ATP = UDP + ADP. It participates in pyrimidine metabolism; CTP biosynthesis via de novo pathway; UDP from UMP (UMPK route): step 1/1. With respect to regulation, inhibited by UTP. In terms of biological role, catalyzes the reversible phosphorylation of UMP to UDP. The protein is Uridylate kinase of Pseudomonas putida (strain ATCC 47054 / DSM 6125 / CFBP 8728 / NCIMB 11950 / KT2440).